A 428-amino-acid chain; its full sequence is D-amino acid dehydrogenase (428 aa).

V3–Y17 contacts FAD.

The protein belongs to the DadA oxidoreductase family. The cofactor is FAD.

The enzyme catalyses a D-alpha-amino acid + A + H2O = a 2-oxocarboxylate + AH2 + NH4(+). It functions in the pathway amino-acid degradation; D-alanine degradation; NH(3) and pyruvate from D-alanine: step 1/1. Functionally, oxidative deamination of D-amino acids. This chain is D-amino acid dehydrogenase, found in Burkholderia cenocepacia (strain ATCC BAA-245 / DSM 16553 / LMG 16656 / NCTC 13227 / J2315 / CF5610) (Burkholderia cepacia (strain J2315)).